The following is a 403-amino-acid chain: Octaketide synthase 1 (403 aa).

C174 is an active-site residue. CoA-binding positions include S281 and 318–321 (GGRA).

Belongs to the thiolase-like superfamily. Chalcone/stilbene synthases family. In terms of assembly, homodimer.

Its pathway is secondary metabolite biosynthesis; flavonoid biosynthesis. In terms of biological role, catalyzes the iterative condensations of 8 molecules of malonyl-CoA to produce aromatic octaketides, SEK4 and SEK4b, the products of the minimal polyketide synthase for the benzoisochromanequinone actinorhodin. May be involved in the biosynthesis of the octaketide barbaloin. This is Octaketide synthase 1 from Aloe arborescens (Kidachi aloe).